Consider the following 245-residue polypeptide: tRNA1(Val) (adenine(37)-N6)-methyltransferase (245 aa).

This sequence belongs to the methyltransferase superfamily. tRNA (adenine-N(6)-)-methyltransferase family.

It is found in the cytoplasm. It catalyses the reaction adenosine(37) in tRNA1(Val) + S-adenosyl-L-methionine = N(6)-methyladenosine(37) in tRNA1(Val) + S-adenosyl-L-homocysteine + H(+). Its function is as follows. Specifically methylates the adenine in position 37 of tRNA(1)(Val) (anticodon cmo5UAC). The chain is tRNA1(Val) (adenine(37)-N6)-methyltransferase from Escherichia coli O7:K1 (strain IAI39 / ExPEC).